Here is a 362-residue protein sequence, read N- to C-terminus: Chromobox protein homolog 8 (362 aa).

A Chromo domain is found at 11 to 69 (FAAEALLKRRIRKGRMEYLVKWKGWSQKYSTWEPEENILDARLLAAFEEREREMELYGP). The segment covering 90–100 (KTYEFRSDSTR) has biased composition (basic and acidic residues). Residues 90-197 (KTYEFRSDST…LGEPSAGLGE (108 aa)) are disordered. At Ser-110 the chain carries Phosphoserine. Basic and acidic residues predominate over residues 142–162 (DPPRDRDRERDRGTSRVDDKP). Ser-164 and Ser-229 each carry phosphoserine. Tyr-234 is subject to Phosphotyrosine. Phosphoserine is present on residues Ser-238, Ser-284, Ser-305, and Ser-325.

In terms of assembly, component of a PRC1-like complex. Interacts with RING1, RNF2, PCGF1, PCGF2, PCGF3, BMI1, PCGF5, PCGF6 and PHC2. Interacts with histone H3. Interacts with MLLT3. Interacts with PHC2. Interacts (via chromodomain) with single-stranded RNA.

Its subcellular location is the nucleus. It localises to the chromosome. In terms of biological role, component of a Polycomb group (PcG) multiprotein PRC1-like complex, a complex class required to maintain the transcriptionally repressive state of many genes, including Hox genes, throughout development. PcG PRC1 complex acts via chromatin remodeling and modification of histones; it mediates monoubiquitination of histone H2A 'Lys-119', rendering chromatin heritably changed in its expressibility. The sequence is that of Chromobox protein homolog 8 (Cbx8) from Mus musculus (Mouse).